A 502-amino-acid chain; its full sequence is RNA-splicing ligase RtcB homolog 2 (502 aa).

Mn(2+)-binding residues include Asp-120, Cys-123, His-228, His-260, and His-354. Residue 227 to 231 participates in GMP binding; it reads NHYAE. GMP is bound by residues 354–355, 403–406, Ser-410, and 429–432; these read HN, GGSM, and HGAG. The active-site GMP-histidine intermediate is the His-429.

It belongs to the RtcB family. As to quaternary structure, catalytic component of the tRNA-splicing ligase complex. It depends on Mn(2+) as a cofactor.

It catalyses the reaction a 3'-end 3'-phospho-ribonucleotide-RNA + a 5'-end dephospho-ribonucleoside-RNA + GTP = a ribonucleotidyl-ribonucleotide-RNA + GMP + diphosphate. The catalysed reaction is a 3'-end 2',3'-cyclophospho-ribonucleotide-RNA + a 5'-end dephospho-ribonucleoside-RNA + GTP + H2O = a ribonucleotidyl-ribonucleotide-RNA + GMP + diphosphate + H(+). Its function is as follows. Catalytic subunit of the tRNA-splicing ligase complex that acts by directly joining spliced tRNA halves to mature-sized tRNAs by incorporating the precursor-derived splice junction phosphate into the mature tRNA as a canonical 3',5'-phosphodiester. May act as an RNA ligase with broad substrate specificity, and may function toward other RNAs. The chain is RNA-splicing ligase RtcB homolog 2 from Culex quinquefasciatus (Southern house mosquito).